A 210-amino-acid chain; its full sequence is uncharacterized protein (210 aa).

Residues 90–193 form the Fe2OG dioxygenase domain; it reads KPDQIIVNEY…RISITFRNVI (104 aa).

This is an uncharacterized protein from Acanthamoeba polyphaga (Amoeba).